The chain runs to 481 residues: Glutamate--tRNA ligase 1 (481 aa).

Residues 11–21 carry the 'HIGH' region motif; sequence PSPTGSLHIGG. The short motif at 244–248 is the 'KMSKS' region element; it reads KLSKR. Lysine 247 contacts ATP.

It belongs to the class-I aminoacyl-tRNA synthetase family. Glutamate--tRNA ligase type 1 subfamily. As to quaternary structure, monomer.

It is found in the cytoplasm. The catalysed reaction is tRNA(Glu) + L-glutamate + ATP = L-glutamyl-tRNA(Glu) + AMP + diphosphate. In terms of biological role, catalyzes the attachment of glutamate to tRNA(Glu) in a two-step reaction: glutamate is first activated by ATP to form Glu-AMP and then transferred to the acceptor end of tRNA(Glu). The sequence is that of Glutamate--tRNA ligase 1 from Caldanaerobacter subterraneus subsp. tengcongensis (strain DSM 15242 / JCM 11007 / NBRC 100824 / MB4) (Thermoanaerobacter tengcongensis).